The sequence spans 344 residues: Serine proteinase inhibitor 2 (344 aa).

This sequence belongs to the serpin family. Poxviruses subfamily.

The protein localises to the host cytoplasm. Functionally, viral serpin that inhibits both cysteine and serine proteinases involved in the regulation of host inflammatory and apoptosis processes. Major anti-apoptotic protein which inhibits both intrinsic and extrinsic pathways and strongly cleaves host CASP1 and CASP8 but is a rather poor inhibitor of host CASP3. Prevents the proteolytic activity of host interleukin-1-beta converting enzyme (ICE) and ICE-like enzymes. Can also block apoptosis through host tumor necrosis factor (TNF) receptor. The inhibition of host ICE is an example of a 'cross-class' interaction, in which a serpin inhibits a non-serine proteinase. Also inhibits granzyme B. This Homo sapiens (Human) protein is Serine proteinase inhibitor 2 (OPG199).